Consider the following 156-residue polypeptide: Arginine repressor (156 aa).

It belongs to the ArgR family.

It is found in the cytoplasm. It participates in amino-acid biosynthesis; L-arginine biosynthesis [regulation]. In terms of biological role, regulates arginine biosynthesis genes. The sequence is that of Arginine repressor from Sodalis glossinidius (strain morsitans).